A 796-amino-acid chain; its full sequence is Probable phosphoketolase (796 aa).

Belongs to the XFP family. It depends on thiamine diphosphate as a cofactor.

This is Probable phosphoketolase from Synechococcus elongatus (strain ATCC 33912 / PCC 7942 / FACHB-805) (Anacystis nidulans R2).